The primary structure comprises 1024 residues: MEKRNETGNNRLKRSNNRGKSKKDWKDASVETTPRETSVDEDNTSVFEDVEAQDSRQKRFSSTLEGNRFEELRSLREKEREVAIQNGLIDDPTKPRQLDEAVTFVGTCPDMCPEYEREQREYQNNLERWEINPETGRVDKNLAVKAFHRPAAGNEQALPSDVRPPPVLKKSLDYLVDKIVCGPDPLENTHFFVRDRTRSIRQDFTLQNCRDLDAVACHERIARYHILCIHQLCEKKQFSAQQEVEQLRKGILQSLCEFYDDLRKVKIRCPNEPEFRSYAIITHLRDPDVVRQSQILPIEIFDDQRVQLALRLSALAQKNNERVGHILPRNTEACPNLYTRFFKLVQSPAVTYLMACLLESHFMSIRKGALKAMRKAFMSAHANFPCGDLKRILHFDTVEQAASFSRYYGLEVSDDNGELSINLNKTAFFNDSKPDFRQLFSQTLVESKLQNRSFADIINGSRYNIDRVSPNTAFSTNIPLSLPFANKEPQPIAGFKKNTPETSVVSKNLSTFNGKFNVNAPVFTPRSFPTKPFSATDISSVQPTNLPNGSTNGTETFIPPVQNSITSNKEAVKPIKNKPKPISFESLSAVGNLIISDSLSRIVRQILQNLYTEWVHEKTNLVFATMFRTIFREVLLDGIASEVYLKSLKKHAISQISVRAHHSWVKKQEKMMLEMREKNRQEKYFSVLNSVVKAESSNITRLPIKRTFYGDTRNLDKASEKLRAEHDRTRRLWKPVLMDSLFSNLQKFPVYEDWHLLIFNASTSSMMKTWLCAKFSLKETNKTSFWHSSYNLFNRQYHVDMPDNVSDLPQTRLCYGACVYNVGLLDEEKRKDLANSDLNSSPKLIQGNDSRSAHESSANKLFSFVHDISRLTITKLPLLLIFWSDSNLDMQGITQKYRFLELITSTWSAISSIHVLTITNDRDMDLEHSLKVLLDNVTVEKSPFAQLEELEVVRKKREAEIEASSKTVKRLASNNKFLTDSNVEGLLEAPTSLENSLVEDDKWASLRQKIKAARDLLKKVETFY.

Residues 1-62 (MEKRNETGNN…QDSRQKRFSS (62 aa)) are disordered. The span at 11-21 (RLKRSNNRGKS) shows a compositional bias: basic residues. A compositionally biased stretch (basic and acidic residues) spans 22–38 (KKDWKDASVETTPRETS). The segment covering 39 to 52 (VDEDNTSVFEDVEA) has biased composition (acidic residues). The PCI domain occupies 243–433 (EVEQLRKGIL…NKTAFFNDSK (191 aa)). At serine 841 the chain carries Phosphoserine. Residues 945–1022 (AQLEELEVVR…ARDLLKKVET (78 aa)) adopt a coiled-coil conformation.

The protein belongs to the SAC3 family.

Its subcellular location is the cytoplasm. The protein localises to the nucleus envelope. This is SAC3 family protein 1 from Schizosaccharomyces pombe (strain 972 / ATCC 24843) (Fission yeast).